The primary structure comprises 485 residues: MHLYNTMEKKKEPLIPIISGKLGIYVCGITAYDFSHIGHARSAIVFDILVRLLRYQGYDVTFIRNFTDIDDKIINRANKEGRSSKEVAEEFINAFHEDMDRLGVLNADIEPKATDYIPEMIECCQKLLEADKAYITASGDVYFRVRSFPDYGKLSGRTPDELRIGVRIVPSEEKEDPLDFVLWKAAKPGEPSWESPWGRGRPGWHIECSAMSEKCWPLPLDIHGGGIDLIFPHHENEIAQTESIVNKPLAKIWMHNGLVQVNSEKMSKSLGNFKIVRDILEAYLPETLRFFLLKKHYRSPIDFSFEGMNETERSQKRVYECIAEVDKALERKSWDSGGSSSSILAELDEQFSLFMSALEDDCNTAAGLGHLFNIIHIVRRALDDKALYSTTDGKVVFEQFREIIRKVDILLGVFGQKPNSFLQDLKTIRIIRNKIDVNQVEELLSKRRQAREEKNFVQADEVRNTLASLGIEIRDTSEGQVWDIL.

Cys-27 contacts Zn(2+). Residues 29–39 carry the 'HIGH' region motif; it reads ITAYDFSHIGH. Zn(2+) is bound by residues Cys-208, His-233, and Glu-237. The 'KMSKS' region signature appears at 265–269; sequence KMSKS. An ATP-binding site is contributed by Lys-268.

The protein belongs to the class-I aminoacyl-tRNA synthetase family. In terms of assembly, monomer. The cofactor is Zn(2+).

Its subcellular location is the cytoplasm. It carries out the reaction tRNA(Cys) + L-cysteine + ATP = L-cysteinyl-tRNA(Cys) + AMP + diphosphate. The chain is Cysteine--tRNA ligase from Lawsonia intracellularis (strain PHE/MN1-00).